Reading from the N-terminus, the 600-residue chain is Sodium- and chloride-dependent betaine transporter (600 aa).

Residues 1-31 (MGTSEHVPLPTDEAKAKELEQSQHSEEPDRG) form a disordered region. Topologically, residues 1–38 (MGTSEHVPLPTDEAKAKELEQSQHSEEPDRGQWTGKFD) are cytoplasmic. The segment covering 12-30 (DEAKAKELEQSQHSEEPDR) has biased composition (basic and acidic residues). 3 helical membrane passes run 39 to 59 (FLMSMVAYAVGLGNVWRFPYL), 68 to 88 (FLVVYMIFFCLAAVPIFLMEV), and 116 to 136 (VVIAFMCIAYFCVIVAWAMFY). Residues 137–207 (MISSIAWVFP…DTGDISEFGG (71 aa)) are Extracellular-facing. Residue N165 is glycosylated (N-linked (GlcNAc...) asparagine). The next 2 membrane-spanning stretches (helical) occupy residues 208–228 (IQWELFFIMAAAWLIVYFALW) and 237–257 (FVYFCALFPYVLIFILLIRGL). The N-linked (GlcNAc...) asparagine glycan is linked to N273. 7 helical membrane passes run 286–306 (AGTQVFYSYGVGFGALIALGS), 321–341 (MCFINGCTSITAGFAVFSILG), 378–398 (VFAVLFFLMITILGLDSQVCM), 420–440 (SLGIFCLFFFCIGIPMVTHSG), 454–474 (GYALLFVVFFEVVGLAYGFGA), 499–519 (FCAPATSLVLFVFCVVYYHPV), and 536–556 (WFLSSCSMVVIPGYAIYYLFF). The Cytoplasmic segment spans residues 557-600 (TNKHLTLKERVRKGLNLDGSFESPAKKNLVNNAEELKFIESSSQ).

It belongs to the sodium:neurotransmitter symporter (SNF) family. In terms of tissue distribution, highly expressed in the head, the excretory canal, tail hypodermal cells, epidermis and vulval epithelial cells. Expressed in the excretory canal-associated neuron and in some non-amphidial sensory neurons in the head (at protein level).

Its subcellular location is the cell membrane. Functionally, betaine transporter dependent on Na(+) and Cl(-) ions that functions primarily in the epidermis to clear betaine from the extracellular space. Elicits current in response to betaine but not in response to GABA, L-carnitine, sarcosine, glycine or dimethylglycine. The protein is Sodium- and chloride-dependent betaine transporter of Caenorhabditis elegans.